The primary structure comprises 74 residues: Salivary glue protein Sgs-7 (74 aa).

An N-terminal signal peptide occupies residues 1–23 (MKLIAVTIIACILLIGFSDLALG).

This chain is Salivary glue protein Sgs-7 (Sgs7), found in Drosophila melanogaster (Fruit fly).